Consider the following 227-residue polypeptide: Chloronitrobenzene nitroreductase (227 aa).

14 to 18 contributes to the FMN binding site; sequence RRTKR. Ser44 provides a ligand contact to NADP(+). FMN contacts are provided by residues 172 to 173 and Arg215; that span reads GL.

The protein belongs to the nitroreductase family. It depends on FMN as a cofactor.

The enzyme catalyses N-phenylhydroxylamine + 2 NADP(+) + H2O = nitrobenzene + 2 NADPH + 2 H(+). It functions in the pathway xenobiotic degradation; nitrobenzene degradation. The protein operates within xenobiotic degradation; 4-chloronitrobenzene degradation. Functionally, involved in the biodegradation of chlorinated nitroaromatic compounds. Catalyzes the reduction of 4-chloronitrobenzene to yield 1-hydroxylamino-4-chlorobenzene. Probably also able to catalyze the two-electron reduction of nitrobenzene (NB) to produce a nitrosobenzene (NOB) intermediate, which is immediately reduced to hydroxylaminobenzene (HAB) by a second two-electron transfer. This Comamonas testosteroni (Pseudomonas testosteroni) protein is Chloronitrobenzene nitroreductase.